A 354-amino-acid polypeptide reads, in one-letter code: MELIPNLPDDVARECLLRSSYQQFPVIASVCRAWNREVSLSQFLHQRKASRHSQELLILSQARVDPAGSGKIIATPEYRISVLESGSGLWTELPPIPGQTKGLPLFCRLVSVGSDLIVLGGLDPITWQAHDSVFVFSFLTSKWRVGATMPGVRRSFFGCASDSDRTVLVAGGHNEEKCALTSAMVYDVSEDKWTFLPDMARERDECKAVFHAGRFHVIGGYATEEQGQFSKTAESFDVSTWEWGPLTEDFLDDTGDTVSPPTCVAGGDLYACWGGDVMMFLNDKWQKVGQIPADVYNVTYVAVRPGMLIVIGNGKALAGYGEATVGYICDLSSSRWVKLETHGGHVQAGCFLEV.

An F-box domain is found at 2–49 (ELIPNLPDDVARECLLRSSYQQFPVIASVCRAWNREVSLSQFLHQRKA). 4 Kelch repeats span residues 63–110 (RVDP…CRLV), 115–163 (DLIV…ASDS), 166–213 (TVLV…FHAG), and 215–263 (FHVI…PPTC).

This chain is F-box/kelch-repeat protein At1g80440, found in Arabidopsis thaliana (Mouse-ear cress).